The following is a 361-amino-acid chain: Peptide chain release factor 1 (361 aa).

N5-methylglutamine is present on Q235.

Belongs to the prokaryotic/mitochondrial release factor family. Methylated by PrmC. Methylation increases the termination efficiency of RF1.

It localises to the cytoplasm. Functionally, peptide chain release factor 1 directs the termination of translation in response to the peptide chain termination codons UAG and UAA. The protein is Peptide chain release factor 1 of Azoarcus sp. (strain BH72).